The following is a 192-amino-acid chain: MYQELIKQELVTAQQALADFIADAENINAIERAATLIAASLRDGGKVMSCGNGGSHCDAMHFAEELTGRYREDRPGYAGIAISDPSHLSCVSNDYGYQYVFSRYLEAVGRPGDVMLGISTSGNSQNIITAIESAKAKGIKVVVLTGKDGGKMAGLADVEIRVPYFGYADRIQEIHIKVIHILIMLIEKELAV.

One can recognise an SIS domain in the interval 37-192 (IAASLRDGGK…IMLIEKELAV (156 aa)). Residue 52–54 (NGG) coordinates substrate. Zn(2+) contacts are provided by histidine 61 and glutamate 65. Substrate is bound by residues glutamate 65, 93-94 (ND), 119-121 (STS), serine 124, and glutamine 172. Positions 172 and 180 each coordinate Zn(2+).

The protein belongs to the SIS family. GmhA subfamily. As to quaternary structure, homotetramer. Zn(2+) serves as cofactor.

The protein resides in the cytoplasm. The catalysed reaction is 2 D-sedoheptulose 7-phosphate = D-glycero-alpha-D-manno-heptose 7-phosphate + D-glycero-beta-D-manno-heptose 7-phosphate. Its pathway is carbohydrate biosynthesis; D-glycero-D-manno-heptose 7-phosphate biosynthesis; D-glycero-alpha-D-manno-heptose 7-phosphate and D-glycero-beta-D-manno-heptose 7-phosphate from sedoheptulose 7-phosphate: step 1/1. In terms of biological role, catalyzes the isomerization of sedoheptulose 7-phosphate in D-glycero-D-manno-heptose 7-phosphate. The sequence is that of Phosphoheptose isomerase from Tolumonas auensis (strain DSM 9187 / NBRC 110442 / TA 4).